Here is a 1299-residue protein sequence, read N- to C-terminus: MHTLRGAPALSDFRLAKLLAQCRERVPSVSSIYAEFVHLIDAPAPLSEADLATLGRLLDYGPRVATGARIGSLLLVLPRPGTISPWSSKATDIVHNCGLGERVRRMERGTAFFIAGPDGQALQDAELERLKPVLHDRMTQAVVGRLEDAAILFAGHTPRPFTTVDVLGGGRAALVTANRELGLALADDEMDYLVARFTELKRNPTDVELMMFAQANSEHCRHKIFNASWTIDGKPQERSLFQAIKNTYVQHKEGVLGAYKDNAAVIEGFEVDRFFPSPESGEWGSVREPAHIMIKVETHNHPTAISPYPGAATGAGGEIRDEGATGRGARPKAGLTGFSVSHLRIPGFEQPWEQPYGKPDRIVSALDIMVDGPLGGAAFNNEFGRPNLTGYFRSYEVQVPTPGGVEVRGYHKPIMIAGGLGNIRASHVQKGRLQPGDKLIVLGGPAMLIGLGGGAASSMAQGASAADLDFASVQRDNAEMERRCQEVIDSCWALGDKNPIRSIHDVGAGGLSNAVPELAHDNDLGGRLELRAVPNAEPGMSPVEIWCNEAQERYVLGVAPEDLARFAALCERERAPFSVLGDATAEQTLKLGDTQFGNAPIDLPMDVLFGKPPRMHRDVTSRPVSFAPLTLDGSLALLAERVLSHPTVADKSFLITIGDRTVSGLSSRDQMVGPWQVPVADCAVTLSTVTSTTGEAMAMGERTPLALIDAAASARMAVGEALTNIAAARIGKLSDVKLSANWMAAAGSPGEDASLYAAVHAVGMELCPALGLTIPVGKDSMSMRTVWEEGGARKAVTSPVSLIISAFAPVLDVRKSLTPQLVDVADDTRLLFIDLARGKQRLGGSVVAHVHGQVGPESPDVEDPALLRGFFAAVQALSESGSLLAYHDRSDGGLWATLCEMAFAGRCGLDVDLAPLGGDVTAALFNEELGAVVQVRASDVARVREVLAQHGLSRDVHELGRPVTALQVRVRHGGDTLMAEDTLALRRTWSRVSYEMQKLRDNPICADQESAARSDASDPGLSPKLTFDPAQDVAAPFIAKGARPRVAVLREQGVNSQQEMAAAFTRAGFAAVDVHMSDILSGRVSLEGFKGVLACGGFSYGDVLGAGGGWAKSILFNPRARDAFAAFFARPDSFGLGVCNGCQMMSQLKDIIPGAEHFPRFVRNASEQYEARLSLVEVSKTPSLFYQGMEGSRMLIVTSHGEGRAEFPSVEDAARVNGLGLVTTRWVDNHGRVAESYPANPNGSPHGIAGLTTRDGRFTITMPHPERVHRSVQHSWRPREWGDDGPWMRMFRNARVWLG.

ATP contacts are provided by residues 310–321, 389–391, and A680; these read GAATGAGGEIRD and TGY. 4 residues coordinate Mg(2+): D681, E720, N724, and D888. An ATP-binding site is contributed by S890. The 254-residue stretch at 1046–1299 folds into the Glutamine amidotransferase type-1 domain; it reads VAVLREQGVN…MFRNARVWLG (254 aa). C1139 acts as the Nucleophile in catalysis. Active-site residues include H1264 and E1266.

The protein in the N-terminal section; belongs to the FGAMS family. Monomer.

The protein localises to the cytoplasm. It catalyses the reaction N(2)-formyl-N(1)-(5-phospho-beta-D-ribosyl)glycinamide + L-glutamine + ATP + H2O = 2-formamido-N(1)-(5-O-phospho-beta-D-ribosyl)acetamidine + L-glutamate + ADP + phosphate + H(+). The protein operates within purine metabolism; IMP biosynthesis via de novo pathway; 5-amino-1-(5-phospho-D-ribosyl)imidazole from N(2)-formyl-N(1)-(5-phospho-D-ribosyl)glycinamide: step 1/2. Its function is as follows. Phosphoribosylformylglycinamidine synthase involved in the purines biosynthetic pathway. Catalyzes the ATP-dependent conversion of formylglycinamide ribonucleotide (FGAR) and glutamine to yield formylglycinamidine ribonucleotide (FGAM) and glutamate. The sequence is that of Phosphoribosylformylglycinamidine synthase from Myxococcus xanthus (strain DK1622).